The following is a 454-amino-acid chain: Asparagine--tRNA ligase (454 aa).

It belongs to the class-II aminoacyl-tRNA synthetase family. Homodimer.

It localises to the cytoplasm. The catalysed reaction is tRNA(Asn) + L-asparagine + ATP = L-asparaginyl-tRNA(Asn) + AMP + diphosphate + H(+). The polypeptide is Asparagine--tRNA ligase (Microcystis aeruginosa (strain NIES-843 / IAM M-2473)).